A 568-amino-acid polypeptide reads, in one-letter code: 2-succinyl-5-enolpyruvyl-6-hydroxy-3-cyclohexene-1-carboxylate synthase (568 aa).

The protein belongs to the TPP enzyme family. MenD subfamily. In terms of assembly, homodimer. The cofactor is Mg(2+). Mn(2+) serves as cofactor. Thiamine diphosphate is required as a cofactor.

It catalyses the reaction isochorismate + 2-oxoglutarate + H(+) = 5-enolpyruvoyl-6-hydroxy-2-succinyl-cyclohex-3-ene-1-carboxylate + CO2. It functions in the pathway quinol/quinone metabolism; 1,4-dihydroxy-2-naphthoate biosynthesis; 1,4-dihydroxy-2-naphthoate from chorismate: step 2/7. The protein operates within quinol/quinone metabolism; menaquinone biosynthesis. In terms of biological role, catalyzes the thiamine diphosphate-dependent decarboxylation of 2-oxoglutarate and the subsequent addition of the resulting succinic semialdehyde-thiamine pyrophosphate anion to isochorismate to yield 2-succinyl-5-enolpyruvyl-6-hydroxy-3-cyclohexene-1-carboxylate (SEPHCHC). The sequence is that of 2-succinyl-5-enolpyruvyl-6-hydroxy-3-cyclohexene-1-carboxylate synthase from Actinobacillus pleuropneumoniae serotype 5b (strain L20).